We begin with the raw amino-acid sequence, 1823 residues long: Laminin subunit alpha-4 (1823 aa).

The first 24 residues, 1–24 (MALSSAWRSVLPLWLLWSAACSRA), serve as a signal peptide directing secretion. Residue Ser-39 is glycosylated (O-linked (Xyl...) (chondroitin sulfate) serine). 12 disulfide bridges follow: Cys-82–Cys-91, Cys-84–Cys-98, Cys-101–Cys-110, Cys-113–Cys-129, Cys-132–Cys-146, Cys-134–Cys-155, Cys-157–Cys-166, Cys-169–Cys-184, Cys-187–Cys-202, Cys-189–Cys-209, Cys-212–Cys-221, and Cys-224–Cys-238. 3 consecutive Laminin EGF-like domains span residues 82–131 (CDCN…FCQP), 132–186 (CPCP…TCKK), and 187–240 (CDCS…NCAV). An N-linked (GlcNAc...) asparagine glycan is attached at Asn-104. Asn-215 carries an N-linked (GlcNAc...) asparagine glycan. Residues 241–255 (CNCGGGPCDSVTGEC) enclose the Laminin EGF-like 4; truncated domain. The domain II and I stretch occupies residues 256–832 (LEEGFEPPTG…AQTRSVASKI (577 aa)). N-linked (GlcNAc...) asparagine glycosylation is present at Asn-315. Residues 320–403 (LLKTKLSERE…KIQEINNKML (84 aa)) adopt a coiled-coil conformation. N-linked (GlcNAc...) asparagine glycosylation occurs at Asn-465. Positions 473–528 (VVLEQLDDYNAKLSDLQEALDQALNYVRDAEDMNRATAARQRDHEKQQERVREQME) form a coiled coil. N-linked (GlcNAc...) asparagine glycans are attached at residues Asn-531, Asn-557, Asn-578, Asn-581, Asn-638, and Asn-646. Positions 581–614 (NLSHDLVQEAIDHAQDLQQEANELSRKLHSSDMN) form a coiled coil. Residues 662–724 (IIYHKDESEN…AVKQLQAAER (63 aa)) are a coiled coil. The Cell attachment site signature appears at 724 to 726 (RGD). Asn-742, Asn-758, Asn-761, Asn-787, and Asn-810 each carry an N-linked (GlcNAc...) asparagine glycan. The stretch at 777–806 (AVNSARDAVRNLTEVVPQLLDQLRTVEQKR) forms a coiled coil. 3 consecutive Laminin G-like domains span residues 833 to 1035 (QVSM…SVPC), 1047 to 1227 (AASY…GYGC), and 1234 to 1402 (SRRA…LYEC). Cys-1005 and Cys-1035 are disulfide-bonded. Asn-1093 carries an N-linked (GlcNAc...) asparagine glycan. A disulfide bridge links Cys-1201 with Cys-1227. N-linked (GlcNAc...) asparagine glycans are attached at residues Asn-1288 and Asn-1366. A disulfide bond links Cys-1370 and Cys-1402. N-linked (GlcNAc...) asparagine glycosylation is present at Asn-1418. The disordered stretch occupies residues 1419–1440 (LSKPKASQNKKGGKSKDAPSWD). Laminin G-like domains lie at 1469-1640 (AYQY…VTPC) and 1647-1820 (TGTY…INSC). 2 disulfide bridges follow: Cys-1617-Cys-1640 and Cys-1792-Cys-1820.

As to quaternary structure, laminin is a complex glycoprotein, consisting of three different polypeptide chains (alpha, beta, gamma), which are bound to each other by disulfide bonds into a cross-shaped molecule comprising one long and three short arms with globules at each end. Alpha-4 is a subunit of laminin-8 (laminin-411), laminin-9 (laminin-421) and laminin-14 (laminin-423). As to expression, detected in placenta (at protein level). Detected in fibroblasts and urine (at protein level). In adult, strong expression in heart, lung, ovary small and large intestines, placenta, liver; weak or no expression in skeletal muscle, kidney, pancreas, testis, prostate, brain. High expression in fetal lung and kidney. Expression in fetal and newborn tissues is observed in certain mesenchymal cells in tissues such as smooth muscle and dermis.

The protein resides in the secreted. It localises to the extracellular space. The protein localises to the extracellular matrix. Its subcellular location is the basement membrane. Its function is as follows. Binding to cells via a high affinity receptor, laminin is thought to mediate the attachment, migration and organization of cells into tissues during embryonic development by interacting with other extracellular matrix components. The sequence is that of Laminin subunit alpha-4 (LAMA4) from Homo sapiens (Human).